The chain runs to 505 residues: Probable cytosol aminopeptidase (505 aa).

Positions 269 and 274 each coordinate Mn(2+). K281 is an active-site residue. 3 residues coordinate Mn(2+): D292, D351, and E353. R355 is an active-site residue.

It belongs to the peptidase M17 family. Mn(2+) serves as cofactor.

The protein resides in the cytoplasm. The enzyme catalyses Release of an N-terminal amino acid, Xaa-|-Yaa-, in which Xaa is preferably Leu, but may be other amino acids including Pro although not Arg or Lys, and Yaa may be Pro. Amino acid amides and methyl esters are also readily hydrolyzed, but rates on arylamides are exceedingly low.. It catalyses the reaction Release of an N-terminal amino acid, preferentially leucine, but not glutamic or aspartic acids.. In terms of biological role, presumably involved in the processing and regular turnover of intracellular proteins. Catalyzes the removal of unsubstituted N-terminal amino acids from various peptides. The chain is Probable cytosol aminopeptidase from Rhodococcus jostii (strain RHA1).